Consider the following 329-residue polypeptide: Ribosomal protein L11 methyltransferase (329 aa).

S-adenosyl-L-methionine-binding residues include threonine 177, glycine 198, aspartate 220, and asparagine 264.

It belongs to the methyltransferase superfamily. PrmA family.

The protein localises to the cytoplasm. It catalyses the reaction L-lysyl-[protein] + 3 S-adenosyl-L-methionine = N(6),N(6),N(6)-trimethyl-L-lysyl-[protein] + 3 S-adenosyl-L-homocysteine + 3 H(+). In terms of biological role, methylates ribosomal protein L11. This Helicobacter pylori (strain J99 / ATCC 700824) (Campylobacter pylori J99) protein is Ribosomal protein L11 methyltransferase.